The chain runs to 577 residues: Protein hinderin (577 aa).

Ser-21 is modified (phosphoserine). Residues 91 to 167 adopt a coiled-coil conformation; the sequence is LKDLCLEDKR…CQELLSLYQK (77 aa). Ser-179 carries the phosphoserine modification. The segment at 251–282 is disordered; the sequence is TLHHPKDDLDKIPSETTTCNCESPGRKPAVPT. Over residues 254 to 263 the composition is skewed to basic and acidic residues; it reads HPKDDLDKIP. A coiled-coil region spans residues 358-402; it reads LKKQISEDRKQQLMLQKMELEIEKERLQHLLAQQETKLLLKQQQL. Disordered regions lie at residues 425–444, 449–492, and 520–540; these read SSSI…RKER, FHSH…GSLK, and LSPN…GAWN. Residues 449–468 show a composition bias toward basic and acidic residues; that stretch reads FHSHMKDDAQWSCQKKDTCR. Phosphoserine is present on residues Ser-490 and Ser-521.

In terms of assembly, interacts (via N- and C-terminal domains) with SMC3 (via central hinge region). As to expression, widely expressed.

Its function is as follows. Competes with SMC1 for binding to SMC3. May affect the availability of SMC3 to engage in the formation of multimeric protein complexes. This is Protein hinderin (KIAA1328) from Homo sapiens (Human).